The sequence spans 171 residues: Co-chaperone protein HscB homolog (171 aa).

A J domain is found at 2–74 (NHFELFRLPF…ISRAEYMLSE (73 aa)).

This sequence belongs to the HscB family. Interacts with HscA and stimulates its ATPase activity.

Co-chaperone involved in the maturation of iron-sulfur cluster-containing proteins. Seems to help targeting proteins to be folded toward HscA. This chain is Co-chaperone protein HscB homolog, found in Photobacterium profundum (strain SS9).